The following is a 296-amino-acid chain: 4-hydroxy-tetrahydrodipicolinate synthase (296 aa).

T49 contributes to the pyruvate binding site. The active-site Proton donor/acceptor is the Y137. K165 serves as the catalytic Schiff-base intermediate with substrate. V207 contacts pyruvate.

This sequence belongs to the DapA family. As to quaternary structure, homotetramer; dimer of dimers.

The protein localises to the cytoplasm. The catalysed reaction is L-aspartate 4-semialdehyde + pyruvate = (2S,4S)-4-hydroxy-2,3,4,5-tetrahydrodipicolinate + H2O + H(+). It participates in amino-acid biosynthesis; L-lysine biosynthesis via DAP pathway; (S)-tetrahydrodipicolinate from L-aspartate: step 3/4. Catalyzes the condensation of (S)-aspartate-beta-semialdehyde [(S)-ASA] and pyruvate to 4-hydroxy-tetrahydrodipicolinate (HTPA). This Nitrobacter hamburgensis (strain DSM 10229 / NCIMB 13809 / X14) protein is 4-hydroxy-tetrahydrodipicolinate synthase.